A 434-amino-acid polypeptide reads, in one-letter code: Citrate-proton symporter (434 aa).

Over 1-21 (MAQHTPATSRAGTFGAILRVT) the chain is Cytoplasmic. A helical transmembrane segment spans residues 22–42 (SGNFLEQFDFFLFGFYATYIA). At 43–54 (RTFFPAESEFAS) the chain is on the periplasmic side. Residues 55-75 (LMLTFAVFGSGFLMRPVGAIV) traverse the membrane as a helical segment. The Cytoplasmic segment spans residues 76–87 (LGAYIDRIGRRK). The helical transmembrane segment at 88 to 108 (GLMVTLAIMGCGTLLIALVPG) threads the bilayer. Topologically, residues 109-111 (YQT) are periplasmic. Residues 112 to 132 (IGLAAPALVLLGRLLQGFSAG) traverse the membrane as a helical segment. Residues 133–164 (VELGGVSVYLSEIATPGNKGFYTSWQSASQQV) are Cytoplasmic-facing. The helical transmembrane segment at 165–185 (AIVVAALIGYSLNITLGHDAI) threads the bilayer. A topological domain (periplasmic) is located at residue Ser-186. The helical transmembrane segment at 187 to 207 (EWGWRIPFFIGCMIIPLIFVL) threads the bilayer. Residues 208 to 238 (RRSLQETEAFLQRKHRPDTREIFATIAKNWR) lie on the Cytoplasmic side of the membrane. A helical transmembrane segment spans residues 239 to 259 (IITAGTLLVAMTTTTFYFITV). Over 260 to 276 (YTPTYGRTVLNLSARDS) the chain is Periplasmic. A helical transmembrane segment spans residues 277 to 297 (LIVTMLVGVSNFIWLPIGGAI). Residues 298 to 304 (SDRIGRR) are Cytoplasmic-facing. The chain crosses the membrane as a helical span at residues 305-325 (AVLMGITLLALITTWPVMQWL). Over 326–335 (TAAPDFTRMT) the chain is Periplasmic. Residues 336–356 (LVLLWFSFFFGMYNGAMVAAL) traverse the membrane as a helical segment. Residues 357–366 (TEVMPVYVRT) are Cytoplasmic-facing. A helical transmembrane segment spans residues 367-387 (VGFSLAFSLATAIFGGLTPAI). The Periplasmic portion of the chain corresponds to 388-400 (STALVKLTGDKSS). Residues 401-421 (PGWWLMCAALCGLAATAMLFV) traverse the membrane as a helical segment. Over 422 to 434 (RLSRGYIAAENKA) the chain is Cytoplasmic.

The protein belongs to the major facilitator superfamily. Metabolite:H+ Symporter (MHS) family (TC 2.A.1.6) family.

The protein localises to the cell inner membrane. Its function is as follows. Uptake of citrate across the boundary membrane with the concomitant transport of protons into the cell (symport system). This chain is Citrate-proton symporter (citA), found in Salmonella typhi.